A 406-amino-acid chain; its full sequence is Vitamin D3 dihydroxylase (406 aa).

Positions 1-15 (MTDTATTPQTTDAPA) are enriched in low complexity. The disordered stretch occupies residues 1 to 24 (MTDTATTPQTTDAPAFPSNRSCPY). T81 contributes to the calciol binding site. Heme contacts are provided by H103 and R107. The calciol site is built by R193, S236, and I293. Positions 297, 353, and 355 each coordinate heme.

Belongs to the cytochrome P450 family. Heme is required as a cofactor.

It localises to the cytoplasm. It carries out the reaction calciol + 2 reduced [2Fe-2S]-[ferredoxin] + O2 + 2 H(+) = calcidiol + 2 oxidized [2Fe-2S]-[ferredoxin] + H2O. The enzyme catalyses calcidiol + 2 reduced [2Fe-2S]-[ferredoxin] + O2 + 2 H(+) = calcitriol + 2 oxidized [2Fe-2S]-[ferredoxin] + H2O. Its function is as follows. Involved in the metabolism of vitamin D3 (calciol) and of a number of sulfonylurea herbicides. Catalyzes the two-step hydroxylation (25- and 1-alpha-hydroxylation) of vitamin D3 (VD3) to yield its active form 1-alpha,25-dihydroxyvitamin D3 (calcitriol). The first step is the hydroxylation of the C-25 position of VD3 to produce 25-hydroxyvitamin D3 (calcidiol). The second reaction is the hydroxylation of the C1-alpha-position of calcidiol to produce calcitriol. It can also hydroxylate vitamin D2. The chain is Vitamin D3 dihydroxylase from Streptomyces griseolus.